We begin with the raw amino-acid sequence, 260 residues long: UPF0246 protein Bcep18194_A5551 (260 aa).

The protein belongs to the UPF0246 family.

The sequence is that of UPF0246 protein Bcep18194_A5551 from Burkholderia lata (strain ATCC 17760 / DSM 23089 / LMG 22485 / NCIMB 9086 / R18194 / 383).